Consider the following 290-residue polypeptide: MISINFNNFFKTLLLILIAFTLHGCDSILFNPHGIIAIQECSILLISFLIMLFVIIPVIFMTIYFSVKYRASNINAKYKPDWCDSKKIEIIVWTIPISIILFLAFVTWNYSHILDPKKSIISKYKPIKIDVVSLDWRWLFIYPEYHIATINEIMFPINRSIIFHITSNSVMNSFFIPSLGSQIYAMPGMMTTLNLMSNSPGKYKGISSNYSGKGFSNMKFTAISVLNIKDFENWIKKAQQSPKKLNKMSIFNIISLPNENHFIEYFSDVKKNLFYEIINQTYSKNKVFKH.

A signal peptide spans 1–24 (MISINFNNFFKTLLLILIAFTLHG). Cysteine 25 carries the N-palmitoyl cysteine lipid modification. Cysteine 25 carries S-diacylglycerol cysteine lipidation. The Extracellular segment spans residues 25-42 (CDSILFNPHGIIAIQECS). A helical transmembrane segment spans residues 43–63 (ILLISFLIMLFVIIPVIFMTI). Residues 64–87 (YFSVKYRASNINAKYKPDWCDSKK) are Cytoplasmic-facing. A helical transmembrane segment spans residues 88 to 108 (IEIIVWTIPISIILFLAFVTW). Topologically, residues 109-290 (NYSHILDPKK…TYSKNKVFKH (182 aa)) are extracellular.

This sequence belongs to the cytochrome c oxidase subunit 2 family. In terms of assembly, heterooctamer of two A chains, two B chains, two C chains and two D chains.

The protein resides in the cell membrane. Its function is as follows. Cytochrome bo(3) ubiquinol terminal oxidase is the component of the aerobic respiratory chain of E.coli that predominates when cells are grown at high aeration. Has proton pump activity across the membrane in addition to electron transfer, pumping 2 protons/electron. This Buchnera aphidicola subsp. Schizaphis graminum (strain Sg) protein is Cytochrome bo(3) ubiquinol oxidase subunit 2 (cyoA).